The sequence spans 460 residues: ATP synthase subunit beta (460 aa).

An ATP-binding site is contributed by 150–157 (GGAGVGKT).

The protein belongs to the ATPase alpha/beta chains family. In terms of assembly, F-type ATPases have 2 components, CF(1) - the catalytic core - and CF(0) - the membrane proton channel. CF(1) has five subunits: alpha(3), beta(3), gamma(1), delta(1), epsilon(1). CF(0) has three main subunits: a(1), b(2) and c(9-12). The alpha and beta chains form an alternating ring which encloses part of the gamma chain. CF(1) is attached to CF(0) by a central stalk formed by the gamma and epsilon chains, while a peripheral stalk is formed by the delta and b chains.

Its subcellular location is the cell inner membrane. The enzyme catalyses ATP + H2O + 4 H(+)(in) = ADP + phosphate + 5 H(+)(out). Functionally, produces ATP from ADP in the presence of a proton gradient across the membrane. The catalytic sites are hosted primarily by the beta subunits. This is ATP synthase subunit beta from Salmonella paratyphi A (strain ATCC 9150 / SARB42).